The sequence spans 664 residues: MTIRILPARLANQIAAGEVVERPASVVKELVENSLDSGATKIDIDIEKGGAKLIRIRDNGSGIVKDELGLALSRHATSKIHTLDDLEAIMSLGFRGEALASISSVSRLTLTSRPATQEQAWSAYTEGRDMQVKLQPTAHPIGTTVEVVDLFFNTPARRKFLRTEKTEFAHIDELLKRIALSRFDVSITLRHNGKVIRQYRAAHNDLQAEKRLATVCGQAFVRCMLKIELEHQGLKLHGWITTPEGARQQSDLQYCYVNGRMMRDKLINHAIRQSYETSLKPEQFAAYVLFIELDPHQVDVNVHPAKHEVRFHQARLVHDFIYQALASALAQSDSIEQPQINESAFHYQAEPEVAPLGSFPAESNEVPQAVYHAIEKAPAYPRKAGQEQQLQPVAPLESSFSSEQGREVAPAPHNERNAWMESRSPARHTTSSNQSERYGEPAPSKQQVKAYAELLHTPDFPSQNVECHPSPSIASPVQELGKAVSVVAQRYLLTTTKAGCQLISLARAEFYRILGQLNGDKAPLKSQPLLVPLSLKLEKGLVHAAQEHQDRFARMGILFKMRNEKALMVMGVPAPLRQQNLQLLIPDLLSYAASQAQKEEQAKNDTAMAQWLALRVAKVKSHYTLSEAIQIISELEQLWQEKLPLQDAQLVTSVDFSATIAQLT.

The disordered stretch occupies residues 382–447 (RKAGQEQQLQ…YGEPAPSKQQ (66 aa)). The span at 427-436 (RHTTSSNQSE) shows a compositional bias: polar residues.

It belongs to the DNA mismatch repair MutL/HexB family.

In terms of biological role, this protein is involved in the repair of mismatches in DNA. It is required for dam-dependent methyl-directed DNA mismatch repair. May act as a 'molecular matchmaker', a protein that promotes the formation of a stable complex between two or more DNA-binding proteins in an ATP-dependent manner without itself being part of a final effector complex. The protein is DNA mismatch repair protein MutL of Vibrio vulnificus (strain YJ016).